Consider the following 319-residue polypeptide: MKILAIESSCDEFSISIIDNNKILTNIISSQIKDHQVFGGVVPELAARLHVQNFNWVLKAALSQSNLNIEEIDYIAYTKSPGLIGSLIIGKLVAETISLYINKPILALDHIQGHIFGASIENEFIYPVLAMVVSGGHTQIEIINSANDFQIIGSTRDDAIGECYDKVARVLGLSYPGGPILDKLALKGNKDFYSLPVLKDDNTYDFSYSGLKTACINLIHNLNQKKQEINLENFAASFQYTATNIIEKKLEKAIKEFKPKTLTVAGGVSANSEIRKIILKLGQKYNIKNTFVPKMSYCTDNAAMIAKLAYEKILLKNKL.

2 residues coordinate Fe cation: H110 and H114. Residues 132–136, D165, G178, D182, and N271 each bind substrate; that span reads VVSGG. D300 contacts Fe cation.

Belongs to the KAE1 / TsaD family. Fe(2+) serves as cofactor.

The protein localises to the cytoplasm. It catalyses the reaction L-threonylcarbamoyladenylate + adenosine(37) in tRNA = N(6)-L-threonylcarbamoyladenosine(37) in tRNA + AMP + H(+). Functionally, required for the formation of a threonylcarbamoyl group on adenosine at position 37 (t(6)A37) in tRNAs that read codons beginning with adenine. Is involved in the transfer of the threonylcarbamoyl moiety of threonylcarbamoyl-AMP (TC-AMP) to the N6 group of A37, together with TsaE and TsaB. TsaD likely plays a direct catalytic role in this reaction. In Mycoplasma capricolum subsp. capricolum (strain California kid / ATCC 27343 / NCTC 10154), this protein is tRNA N6-adenosine threonylcarbamoyltransferase.